The primary structure comprises 506 residues: Maturase K (506 aa).

Belongs to the intron maturase 2 family. MatK subfamily.

The protein localises to the plastid. Its subcellular location is the chloroplast. In terms of biological role, usually encoded in the trnK tRNA gene intron. Probably assists in splicing its own and other chloroplast group II introns. This chain is Maturase K, found in Mentzelia lindleyi (Blazing star).